Consider the following 174-residue polypeptide: MIDSDGFRANVGIIICNRYGQVMWARRFGQHSWQFPQGGVDDGESAEEAMYRELYEEVGLRPEHVTVLTSTRSWLRYRLPKRLVRQDSKPVCIGQKQKWFLLQLKSQDSAINLSSSGHPEFDDWRWVSYWYPVRQVVSFKRDVYRKVMKEFAVTALSFQTQEIPKKRVRQKTTG.

A Nudix hydrolase domain is found at 6-149 (GFRANVGIII…KRDVYRKVMK (144 aa)). The short motif at 38–59 (GGVDDGESAEEAMYRELYEEVG) is the Nudix box element.

It belongs to the Nudix hydrolase family. RppH subfamily. Requires a divalent metal cation as cofactor.

Accelerates the degradation of transcripts by removing pyrophosphate from the 5'-end of triphosphorylated RNA, leading to a more labile monophosphorylated state that can stimulate subsequent ribonuclease cleavage. This chain is RNA pyrophosphohydrolase, found in Shewanella oneidensis (strain ATCC 700550 / JCM 31522 / CIP 106686 / LMG 19005 / NCIMB 14063 / MR-1).